A 27-amino-acid chain; its full sequence is Protein YkiD (27 aa).

In Escherichia coli (strain K12), this protein is Protein YkiD.